A 103-amino-acid polypeptide reads, in one-letter code: Small ribosomal subunit protein uS10 (103 aa).

This sequence belongs to the universal ribosomal protein uS10 family. As to quaternary structure, part of the 30S ribosomal subunit.

In terms of biological role, involved in the binding of tRNA to the ribosomes. In Salinibacter ruber (strain DSM 13855 / M31), this protein is Small ribosomal subunit protein uS10.